The following is a 72-amino-acid chain: Kappa-conotoxin PVIIA (72 aa).

The N-terminal stretch at 1-22 (MKLTCVVIVVVLFLTACQLITA) is a signal peptide. A propeptide spanning residues 23 to 45 (DDSRRTQKHRALRSTTKLSLSTR) is cleaved from the precursor. 3 cysteine pairs are disulfide-bonded: Cys46/Cys61, Cys53/Cys65, and Cys60/Cys71. A 4-hydroxyproline modification is found at Pro49.

Belongs to the conotoxin O1 superfamily. In terms of processing, this toxin is not amidated at the C-terminal Val residue. Expressed by the venom duct.

The protein localises to the secreted. Kappa-conotoxins bind and inhibit voltage-gated potassium channels (Kv). This toxin inhibits the drosophila Shaker channel (IC(50)=57-80 nM). In vivo, when tested in fish, this toxin induces hyperactivity, followed by continuous contraction and extension of major fins, without immobilization or death. Injection of this peptide together with the delta-conotoxin PVIA causes the sudden tetanus of prey (STOP) syndrome, which is a single, lethal 'fin-pop' in envenomed fish. When tested in mice, induces hyperactivity. This Conus purpurascens (Purple cone) protein is Kappa-conotoxin PVIIA.